The following is a 439-amino-acid chain: Histone acetyltransferase GCN5 (439 aa).

2 stretches are compositionally biased toward basic and acidic residues: residues 1-28 (MVTK…KLEN) and 39-59 (ETNK…KETE). A disordered region spans residues 1 to 59 (MVTKHQIEEDHLDGATTDPEVKRVKLENNVEEIQPEQAETNKQEGTDKENKGKFEKETE). The N-acetyltransferase domain occupies 100–255 (IEFRVVNNDN…GGTLMQCSML (156 aa)). Catalysis depends on E173, which acts as the Proton donor/acceptor. Acetyl-CoA contacts are provided by residues 177-179 (CAI), 184-190 (QVRGYGA), and 216-219 (YAIG). The Bromo domain maps to 327-431 (PKRGPHDAAI…KFFNNKVKEI (105 aa)).

Belongs to the acetyltransferase family. GCN5 subfamily. In terms of assembly, component of the 1.8 MDa SAGA (Spt-Ada-Gcn5 acetyltransferase) complex, which is composed of 19 subunits TRA1, SPT7, TAF5, NGG1/ADA3, SGF73, SPT20/ADA5, SPT8, TAF12, TAF6, HFI1/ADA1, UBP8, GCN5, ADA2, SPT3, SGF29, TAF10, TAF9, SGF11 and SUS1. The SAGA complex is composed of 4 modules, namely the HAT (histone acetyltransferase) module (GCN5, ADA2, NGG1/ADA3 and SGF29), the DUB (deubiquitinating) module (UBP8, SGF11, SGF73 and SUS1), the core or TAF (TBP-associated factor) module (TAF5, TAF6, TAF9, TAF10 and TAF12), and the Tra1 or SPT (Suppressor of Ty) module (TRA1, HFI1/ADA1, SPT3, SPT7, SPT8 and SPT20/ADA5). The Tra1/SPT module binds activators, the core module recruits TBP (TATA-binding protein), the HAT module contains the histone H3 acetyltransferase GCN5, and the DUB module comprises the histone H2B deubiquitinase UBP8. Also identified in an altered form of SAGA, named SALSA (SAGA altered, Spt8 absent) or SLIK (SAGA-like) complex, which contains a C-terminal truncated form of SPT7 and is missing SPT8. However, it has been shown that the SAGA and SAGA-like SALSA/SLIK transcriptional coactivators are structurally and biochemically equivalent. Component of the 0.8 MDa ADA complex, a HAT complex distinct from SAGA, which at least consists of ADA2, NGG1/ADA3, AHC1, AHC2, SGF29 and GCN5. Component of an ADA/GCN5 complex that consists of HFI1/ADA1, ADA2, NGG1/ADA3, SPT20/ADA5 and GCN5 and probably is a subcomplex of SAGA.

Its subcellular location is the nucleus. It is found in the cytoplasm. The enzyme catalyses L-lysyl-[protein] + acetyl-CoA = N(6)-acetyl-L-lysyl-[protein] + CoA + H(+). It catalyses the reaction (2E)-butenoyl-CoA + L-lysyl-[protein] = N(6)-(2E)-butenoyl-L-lysyl-[protein] + CoA + H(+). Its function is as follows. Histone acetyltransferase that acetylates histone H2B to form H2BK11ac and H2BK16ac, histone H3 to form H3K9ac, H3K14ac, H3K18ac, H3K23ac, H3K27ac and H3K36ac, with a lower preference histone H4 to form H4K8ac and H4K16ac, and contributes to H2A.Z acetylation. Acetylation of histones gives a specific tag for epigenetic transcription activation and elongation. Operates in concert with certain DNA-binding transcriptional activators such as GCN4 or HAP2/3/4. Its acetyltransferase activity seems to be dependent on the association in different multisubunit complexes. Component of the transcription coactivator SAGA complex. SAGA acts as a general cofactor required for essentially all RNA polymerase II transcription. At the promoters, SAGA is required for transcription pre-initiation complex (PIC) recruitment. It influences RNA polymerase II transcriptional activity through different activities such as TBP interaction (via core/TAF module) and promoter selectivity, interaction with transcription activators (via Tra1/SPT module), and chromatin modification through histone acetylation (via HAT module) and deubiquitination (via DUB module). SAGA preferentially acetylates histones H3 (to form H3K9ac, H3K14ac, H3K18ac and H3K23ac) and H2B and deubiquitinates histone H2B. SAGA interacts with DNA via upstream activating sequences (UASs). Also identified in a modified version of SAGA named SALSA or SLIK. The cleavage of SPT7 and the absence of the SPT8 subunit in SLIK neither drive any major conformational differences in its structure compared with SAGA, nor significantly affect HAT, DUB, or DNA-binding activities. Component of the ADA histone acetyltransferase complex, which preferentially acetylates nucleosomal histones H3 (to form H3K14ac and H3K18ac) and H2B. In addition to histone acetyltransferase, can use different acyl-CoA substrates, such as (2E)-butenoyl-CoA (crotonyl-CoA) and is able to mediate histone crotonylation. Controls the metaphase-to-anaphase transition and is required for correct chromosome segregation and centromere/kinetochore function in mitosis. May be involved in response to DNA damage by genotoxic agents. This is Histone acetyltransferase GCN5 from Saccharomyces cerevisiae (strain ATCC 204508 / S288c) (Baker's yeast).